We begin with the raw amino-acid sequence, 265 residues long: MICOS complex subunit Mic27 (265 aa).

Residues 1–27 (MAAFRMGKLTTIPAGLIYASINVRLAK) constitute a mitochondrion transit peptide. Residues 28-110 (EEEPKKQLVR…YVYLKNPPQD (83 aa)) lie on the Mitochondrial intermembrane side of the membrane. The chain crosses the membrane as a helical span at residues 111–129 (FLPKMGVITASGLAGLLSA). Over 130–137 (RKGSRFKK) the chain is Mitochondrial matrix. The helical transmembrane segment at 138–155 (IAYPLGLATLGATVCYPA) threads the bilayer. The Mitochondrial intermembrane portion of the chain corresponds to 156–265 (QSVIIAKITG…DDKDMYSTRS (110 aa)). 2 disordered regions span residues 187–215 (SENE…PDLK) and 229–265 (VIKS…STRS). Residue Ser204 is modified to Phosphoserine. A compositionally biased stretch (polar residues) spans 229-241 (VIKSESTSGTTQF). The segment covering 246-265 (KLMDHGQSHPDDKDMYSTRS) has biased composition (basic and acidic residues).

The protein belongs to the apolipoprotein O/MICOS complex subunit Mic27 family. As to quaternary structure, component of the mitochondrial contact site and cristae organizing system (MICOS) complex, composed of at least MICOS10/MIC10, CHCHD3/MIC19, CHCHD6/MIC25, APOOL/MIC27, IMMT/MIC60, APOO/MIC23/MIC26 and MICOS13/MIC13. This complex was also known under the names MINOS or MitOS complex. The MICOS complex associates with mitochondrial outer membrane proteins SAMM50, MTX1 and MTX2 (together described as components of the mitochondrial outer membrane sorting assembly machinery (SAM) complex) and DNAJC11, mitochondrial inner membrane protein TMEM11 and with HSPA9. The MICOS and SAM complexes together with DNAJC11 are part of a large protein complex spanning both membranes termed the mitochondrial intermembrane space bridging (MIB) complex. Interacts with MICOS10/MIC10, IMMT/MIC60 and APOO/MIC23/MIC26.

It localises to the mitochondrion inner membrane. It is found in the mitochondrion. Component of the MICOS complex, a large protein complex of the mitochondrial inner membrane that plays crucial roles in the maintenance of crista junctions, inner membrane architecture, and formation of contact sites to the outer membrane. Specifically binds to cardiolipin (in vitro) but not to the precursor lipid phosphatidylglycerol. Plays a crucial role in crista junction formation and mitochondrial function. This is MICOS complex subunit Mic27 (Apool) from Mus musculus (Mouse).